The primary structure comprises 215 residues: Probable GTP-binding protein EngB (215 aa).

The 175-residue stretch at 26–200 (EGIEVAFAGR…RAKLDEWFAP (175 aa)) folds into the EngB-type G domain. GTP is bound by residues 34–41 (GRSNAGKS), 61–65 (GRTQL), 79–82 (DLPG), 146–149 (TKAD), and 179–181 (FSS). Mg(2+) is bound by residues serine 41 and threonine 63.

This sequence belongs to the TRAFAC class TrmE-Era-EngA-EngB-Septin-like GTPase superfamily. EngB GTPase family. Mg(2+) is required as a cofactor.

Functionally, necessary for normal cell division and for the maintenance of normal septation. The polypeptide is Probable GTP-binding protein EngB (Aliivibrio fischeri (strain MJ11) (Vibrio fischeri)).